Consider the following 274-residue polypeptide: Cytochrome b-c1 complex subunit Rieske, mitochondrial (274 aa).

Topologically, residues 79 to 103 are mitochondrial matrix; the sequence is SHTDIKVPDFSDYRRAEVLDSTKSS. The chain crosses the membrane as a helical span at residues 104–140; sequence KESSEARKGFSYLVTATTTVGVAYAAKNAVSQFVSSM. Over 141-274 the chain is Mitochondrial intermembrane; sequence SASADVLAMS…FTSGDVVVVG (134 aa). The 86-residue stretch at 187–272 folds into the Rieske domain; sequence EAAVEVSQLR…YEFTSGDVVV (86 aa). [2Fe-2S] cluster is bound by residues cysteine 217, histidine 219, cysteine 236, histidine 239, and serine 241. A disulfide bond links cysteine 222 and cysteine 238.

Belongs to the Rieske iron-sulfur protein family. As to quaternary structure, component of the ubiquinol-cytochrome c oxidoreductase (cytochrome b-c1 complex, complex III, CIII), a multisubunit enzyme composed of 11 subunits. The complex is composed of 3 respiratory subunits cytochrome b, cytochrome c1 and Rieske protein UQCRFS1, 2 core protein subunits UQCRC1/QCR1 and UQCRC2/QCR2, and 6 low-molecular weight protein subunits UQCRH/QCR6, UQCRB/QCR7, UQCRQ/QCR8, UQCR10/QCR9, UQCR11/QCR10 and subunit 9, the cleavage product of Rieske protein UQCRFS1. The complex exists as an obligatory dimer and forms supercomplexes (SCs) in the inner mitochondrial membrane with NADH-ubiquinone oxidoreductase (complex I, CI) and cytochrome c oxidase (complex IV, CIV), resulting in different assemblies (supercomplex SCI(1)III(2)IV(1) and megacomplex MCI(2)III(2)IV(2)). Incorporation of the Rieske protein UQCRFS1 is the penultimate step in complex III assembly. Interacts with TTC19, which is involved in the clearance of UQCRFS1 fragments. In terms of assembly, component of the ubiquinol-cytochrome c oxidoreductase (cytochrome b-c1 complex, complex III, CIII). Subunit 9 corresponds to the mitochondrial targeting sequence (MTS) of Rieske protein UQCRFS1. It is retained after processing and incorporated inside complex III, where it remains bound to the complex and localizes between the 2 core subunits UQCRC1/QCR1 and UQCRC2/QCR2. [2Fe-2S] cluster is required as a cofactor. In terms of processing, proteolytic processing is necessary for the correct insertion of UQCRFS1 in the complex III dimer. Several fragments are generated during UQCRFS1 insertion, most probably due to the endogenous matrix-processing peptidase (MPP) activity of the 2 core protein subunits UQCRC1/QCR1 and UQCRC2/QCR2, which are homologous to the 2 mitochondrial-processing peptidase (MPP) subunits beta-MPP and alpha-MPP respectively. The action of the protease is also necessary for the clearance of the UQCRFS1 fragments.

The protein localises to the mitochondrion inner membrane. It carries out the reaction a quinol + 2 Fe(III)-[cytochrome c](out) = a quinone + 2 Fe(II)-[cytochrome c](out) + 2 H(+)(out). In terms of biological role, component of the ubiquinol-cytochrome c oxidoreductase, a multisubunit transmembrane complex that is part of the mitochondrial electron transport chain which drives oxidative phosphorylation. The respiratory chain contains 3 multisubunit complexes succinate dehydrogenase (complex II, CII), ubiquinol-cytochrome c oxidoreductase (cytochrome b-c1 complex, complex III, CIII) and cytochrome c oxidase (complex IV, CIV), that cooperate to transfer electrons derived from NADH and succinate to molecular oxygen, creating an electrochemical gradient over the inner membrane that drives transmembrane transport and the ATP synthase. The cytochrome b-c1 complex catalyzes electron transfer from ubiquinol to cytochrome c, linking this redox reaction to translocation of protons across the mitochondrial inner membrane, with protons being carried across the membrane as hydrogens on the quinol. In the process called Q cycle, 2 protons are consumed from the matrix, 4 protons are released into the intermembrane space and 2 electrons are passed to cytochrome c. The Rieske protein is a catalytic core subunit containing a [2Fe-2S] iron-sulfur cluster. It cycles between 2 conformational states during catalysis to transfer electrons from the quinol bound in the Q(0) site in cytochrome b to cytochrome c1. Incorporation of UQCRFS1 is the penultimate step in complex III assembly. Functionally, component of the ubiquinol-cytochrome c oxidoreductase (cytochrome b-c1 complex, complex III, CIII). UQCRFS1 undergoes proteolytic processing once it is incorporated in the complex III dimer. One of the fragments, called subunit 9, corresponds to its mitochondrial targeting sequence (MTS). The proteolytic processing is necessary for the correct insertion of UQCRFS1 in the complex III dimer, but the persistence of UQCRFS1-derived fragments may prevent newly imported UQCRFS1 to be processed and assembled into complex III and is detrimental for the complex III structure and function. The polypeptide is Cytochrome b-c1 complex subunit Rieske, mitochondrial (Uqcrfs1) (Rattus norvegicus (Rat)).